A 111-amino-acid chain; its full sequence is Nucleoid-associated protein SynRCC307_0025 (111 aa).

Belongs to the YbaB/EbfC family. As to quaternary structure, homodimer.

The protein resides in the cytoplasm. Its subcellular location is the nucleoid. In terms of biological role, binds to DNA and alters its conformation. May be involved in regulation of gene expression, nucleoid organization and DNA protection. The chain is Nucleoid-associated protein SynRCC307_0025 from Synechococcus sp. (strain RCC307).